The following is a 205-amino-acid chain: 3-demethoxyubiquinol 3-hydroxylase (205 aa).

Fe cation contacts are provided by glutamate 54, glutamate 84, histidine 87, glutamate 136, glutamate 168, and histidine 171.

This sequence belongs to the COQ7 family. Fe cation serves as cofactor.

It localises to the cell membrane. It carries out the reaction a 5-methoxy-2-methyl-3-(all-trans-polyprenyl)benzene-1,4-diol + AH2 + O2 = a 3-demethylubiquinol + A + H2O. It participates in cofactor biosynthesis; ubiquinone biosynthesis. In terms of biological role, catalyzes the hydroxylation of 2-nonaprenyl-3-methyl-6-methoxy-1,4-benzoquinol during ubiquinone biosynthesis. This chain is 3-demethoxyubiquinol 3-hydroxylase, found in Paracidovorax citrulli (strain AAC00-1) (Acidovorax citrulli).